A 334-amino-acid polypeptide reads, in one-letter code: MTLSGKPAALLVGTLKHAHKEWEALGKYAELKTYSDGTREDFLAKCKTEFQNVKAICRTYNSKFYMGIFDKEIIDNLPPSVKFICHLGAGYETVDVAACTARGIQVSHVPKAVDDATADVGIFLMLGALRGFNQGIFELHKNNWNANCKPSHDPEGKTLGILGLGGIGKTMAKRARAFDMKIVYHNRTPLPEEEAEGAEFVSFDDLLAKSDVLSLNLPLNAHTRHIIGKPEFQKMKRGIVIVNTARGAVMDEAALVEALDEGIVYSAGLDVFEEEPKIHPGLLENEKVILLPHLGTNSLETQYKMECAVLMNVKNGIVNDSLPNLVPEQRGDIE.

Residues 166 to 167 (GI), 244 to 246 (TAR), and D270 contribute to the NAD(+) site. The active site involves R246. E275 is a catalytic residue. The Proton donor role is filled by H293. Residue 293 to 296 (HLGT) coordinates NAD(+).

Belongs to the D-isomer specific 2-hydroxyacid dehydrogenase family.

In Schizosaccharomyces pombe (strain 972 / ATCC 24843) (Fission yeast), this protein is Putative 2-hydroxyacid dehydrogenase UNK4.10.